Consider the following 168-residue polypeptide: MADQPSGNNDAKQAETNGNTVPASLNVLTQYIKDLSFESPGAPQSLRARDKAPSININVNVNANPLGGTDYDVLLTLTAKAEADNVVLFNVELIYGGVFRIQGFPQEHMLPLLFIECPRLLFPFARQIIADATRNGGFPPLMIDPIDFARMFQQRLAEEEARRKVQVS.

Positions 1–21 (MADQPSGNNDAKQAETNGNTV) are disordered.

It belongs to the SecB family. In terms of assembly, homotetramer, a dimer of dimers. One homotetramer interacts with 1 SecA dimer.

The protein localises to the cytoplasm. Functionally, one of the proteins required for the normal export of preproteins out of the cell cytoplasm. It is a molecular chaperone that binds to a subset of precursor proteins, maintaining them in a translocation-competent state. It also specifically binds to its receptor SecA. This Chelativorans sp. (strain BNC1) protein is Protein-export protein SecB.